Consider the following 628-residue polypeptide: Kinesin-like protein tea2 (628 aa).

The interval 2–122 (SSSSSKPVNT…TTSQQTNSKG (121 aa)) is interaction with mal3. Serine 82 is subject to Phosphoserine. The Kinesin motor domain occupies 132-460 (GIITSIRIRP…LKFASRAQNL (329 aa)). 218–225 (GMTGTGKT) contributes to the ATP binding site. Residues 530–557 (LRMEELLSDHNFEIADLRDELQDKEQII) adopt a coiled-coil conformation. A disordered region spans residues 588–628 (VTRGSRSSSDQFSNETKTEILPDDQQQSKKDSVTQETQLLS). Residues 589–602 (TRGSRSSSDQFSNE) show a composition bias toward polar residues. The segment covering 603 to 620 (TKTEILPDDQQQSKKDSV) has biased composition (basic and acidic residues).

It belongs to the TRAFAC class myosin-kinesin ATPase superfamily. Kinesin family. Interacts with mal3 and tip1.

It is found in the cytoplasm. The protein resides in the cytoskeleton. Promotes microtubule growth, possibly through interactions with the microtubule end, and is important for establishing and maintaining polarized growth along the long axis of the cell. Acts as a kinesin motor protein that moves along microtubules and is required for proper localization of tea1 and tip1 to the cell tips and microtubules, respectively. ATPase activity stimulated via interaction with mal3. This is Kinesin-like protein tea2 from Schizosaccharomyces pombe (strain 972 / ATCC 24843) (Fission yeast).